A 220-amino-acid chain; its full sequence is Probable glutathione S-transferase parA (220 aa).

The region spanning 4-83 is the GST N-terminal domain; that stretch reads NNVVLLDFWP…YIDEVWHDKC (80 aa). Glutathione contacts are provided by residues serine 14, lysine 41, isoleucine 55, and 67-68; that span reads ES. In terms of domain architecture, GST C-terminal spans 89 to 209; the sequence is DPYERSQARF…LPHPHKIYGF (121 aa).

Belongs to the GST superfamily. HSP26 family.

The catalysed reaction is RX + glutathione = an S-substituted glutathione + a halide anion + H(+). The protein is Probable glutathione S-transferase parA (PARA) of Nicotiana tabacum (Common tobacco).